The following is a 185-amino-acid chain: Translation initiation factor IF-3, chloroplastic (185 aa).

Belongs to the IF-3 family. Monomer.

The protein localises to the plastid. The protein resides in the chloroplast. Functionally, IF-3 binds to the 30S ribosomal subunit and shifts the equilibrium between 70S ribosomes and their 50S and 30S subunits in favor of the free subunits, thus enhancing the availability of 30S subunits on which protein synthesis initiation begins. This Cyanidium caldarium (Red alga) protein is Translation initiation factor IF-3, chloroplastic.